Reading from the N-terminus, the 205-residue chain is 3-isopropylmalate dehydratase small subunit (205 aa).

This sequence belongs to the LeuD family. LeuD type 1 subfamily. In terms of assembly, heterodimer of LeuC and LeuD.

The enzyme catalyses (2R,3S)-3-isopropylmalate = (2S)-2-isopropylmalate. It participates in amino-acid biosynthesis; L-leucine biosynthesis; L-leucine from 3-methyl-2-oxobutanoate: step 2/4. In terms of biological role, catalyzes the isomerization between 2-isopropylmalate and 3-isopropylmalate, via the formation of 2-isopropylmaleate. The protein is 3-isopropylmalate dehydratase small subunit of Christiangramia forsetii (strain DSM 17595 / CGMCC 1.15422 / KT0803) (Gramella forsetii).